Here is a 466-residue protein sequence, read N- to C-terminus: Bifunctional protein GlmU (466 aa).

The pyrophosphorylase stretch occupies residues 1-233 (MLHKSVLGLV…ADEAMGANDR (233 aa)). Residues 11-14 (LAAG), Lys-25, Gln-79, and 84-85 (GT) each bind UDP-N-acetyl-alpha-D-glucosamine. Asp-108 is a Mg(2+) binding site. Gly-143, Glu-158, Asn-173, and Asn-231 together coordinate UDP-N-acetyl-alpha-D-glucosamine. Asn-231 contributes to the Mg(2+) binding site. A linker region spans residues 234–254 (AQLAALEAVYRQRKVQELFAQ). An N-acetyltransferase region spans residues 255-466 (GVTLIDPNRI…QKKKEHKNDA (212 aa)). UDP-N-acetyl-alpha-D-glucosamine contacts are provided by Arg-337 and Lys-355. His-367 acts as the Proton acceptor in catalysis. Residues Tyr-370 and Asn-381 each coordinate UDP-N-acetyl-alpha-D-glucosamine. Acetyl-CoA contacts are provided by residues Ala-384, 390-391 (NY), Ser-409, Ala-427, and Arg-444.

The protein in the N-terminal section; belongs to the N-acetylglucosamine-1-phosphate uridyltransferase family. It in the C-terminal section; belongs to the transferase hexapeptide repeat family. In terms of assembly, homotrimer. The cofactor is Mg(2+).

It is found in the cytoplasm. The enzyme catalyses alpha-D-glucosamine 1-phosphate + acetyl-CoA = N-acetyl-alpha-D-glucosamine 1-phosphate + CoA + H(+). It catalyses the reaction N-acetyl-alpha-D-glucosamine 1-phosphate + UTP + H(+) = UDP-N-acetyl-alpha-D-glucosamine + diphosphate. It functions in the pathway nucleotide-sugar biosynthesis; UDP-N-acetyl-alpha-D-glucosamine biosynthesis; N-acetyl-alpha-D-glucosamine 1-phosphate from alpha-D-glucosamine 6-phosphate (route II): step 2/2. It participates in nucleotide-sugar biosynthesis; UDP-N-acetyl-alpha-D-glucosamine biosynthesis; UDP-N-acetyl-alpha-D-glucosamine from N-acetyl-alpha-D-glucosamine 1-phosphate: step 1/1. Its pathway is bacterial outer membrane biogenesis; LPS lipid A biosynthesis. Functionally, catalyzes the last two sequential reactions in the de novo biosynthetic pathway for UDP-N-acetylglucosamine (UDP-GlcNAc). The C-terminal domain catalyzes the transfer of acetyl group from acetyl coenzyme A to glucosamine-1-phosphate (GlcN-1-P) to produce N-acetylglucosamine-1-phosphate (GlcNAc-1-P), which is converted into UDP-GlcNAc by the transfer of uridine 5-monophosphate (from uridine 5-triphosphate), a reaction catalyzed by the N-terminal domain. This Dichelobacter nodosus (strain VCS1703A) protein is Bifunctional protein GlmU.